Reading from the N-terminus, the 37-residue chain is Large ribosomal subunit protein bL36c (37 aa).

Belongs to the bacterial ribosomal protein bL36 family.

The protein localises to the plastid. Its subcellular location is the chloroplast. The protein is Large ribosomal subunit protein bL36c of Lactuca sativa (Garden lettuce).